The sequence spans 974 residues: Toxin subunit YenC1 (974 aa).

RHS repeat units follow at residues 165-179 (AGQC…GLNQ), 290-304 (GVLT…TQRL), 322-336 (FQDL…GNVL), 354-368 (VPEN…YQLV), 398-412 (NYIR…GNLM), 490-504 (SDSE…SQRV), 570-584 (NDEL…IGSS), 596-610 (SQEE…AVWM), and 630-644 (DATG…YYQP). Positions 600-680 (YYPYGGTAVW…PIVLHDPDGL (81 aa)) are RHS-repeat associated core domain. The segment at 699–940 (ISSLKGTGPF…GEVSASTLLE (242 aa)) is cytotoxic necrotising factor domain.

It belongs to the RHS family. In terms of assembly, semipurified toxin complex consists of at least YenA1-YenA2-YenB-YenC1-YenC2-Chi1-Chi2. The Yen-TC:K9 subcomplex is about 26 nm tall and 22 nm in diameter with 5-fold symmetry and 5 copies of YenA1, YenA2, Chi1 and Chi2; the chitinase subunits may be solvent accessible on the exterior the complex. The Yen-TC:K9 subcomplex has no insecticidal activity. The native complex with additional YenB, YenC1 and YenC2 subunits is 16 nm taller and is insecticidal; the toxicity-conferring subunits are present at about 1 copy each.

The protein resides in the secreted. Its activity is regulated as follows. Toxin complex is secreted when grown at 25 degrees Celsius or less; at higher temperatures the proteins are present intracellularly but not secreted. Part of an orally active toxin complex (TC) with strong insecticidal effects on larvae of the Coleoptera Costelytra zealandica, Acrossidius tasmania and Adoryphorus couloni and some Lepidoptera larvae. The TC has an endochitinase activity. The chain is Toxin subunit YenC1 from Yersinia entomophaga.